A 116-amino-acid chain; its full sequence is Large ribosomal subunit protein uL18 (116 aa).

This sequence belongs to the universal ribosomal protein uL18 family. As to quaternary structure, part of the 50S ribosomal subunit; part of the 5S rRNA/L5/L18/L25 subcomplex. Contacts the 5S and 23S rRNAs.

Functionally, this is one of the proteins that bind and probably mediate the attachment of the 5S RNA into the large ribosomal subunit, where it forms part of the central protuberance. In Hahella chejuensis (strain KCTC 2396), this protein is Large ribosomal subunit protein uL18.